The primary structure comprises 444 residues: Phosphoglucosamine mutase (444 aa).

Residue S102 is the Phosphoserine intermediate of the active site. Mg(2+) is bound by residues S102, D241, D243, and D245. S102 carries the post-translational modification Phosphoserine.

Belongs to the phosphohexose mutase family. The cofactor is Mg(2+). In terms of processing, activated by phosphorylation.

The catalysed reaction is alpha-D-glucosamine 1-phosphate = D-glucosamine 6-phosphate. Its function is as follows. Catalyzes the conversion of glucosamine-6-phosphate to glucosamine-1-phosphate. The polypeptide is Phosphoglucosamine mutase (Erwinia tasmaniensis (strain DSM 17950 / CFBP 7177 / CIP 109463 / NCPPB 4357 / Et1/99)).